The chain runs to 1105 residues: Probable diguanylate cyclase DgcE (1105 aa).

10 helical membrane passes run 9 to 29 (LIALPHPLLHLVSLGLVSFIF), 38 to 58 (QFGTQLAPLWFPTSIMMVAFY), 64 to 84 (MWPGIALSCSLGNIAASILLF), 88 to 108 (SLNMTWTTINIVEAVVGAVLL), 127 to 147 (LALGSAIVPPLLGGVLVVLLT), 156 to 176 (FLIWVLSESIGALALVPLGLL), 190 to 207 (LLFESLLTLAITLTLSWL), 211 to 228 (YLPWPFTFIIVLLMWSAV), 236 to 256 (FLIFLTTVMMVSLMMAADPSL), and 270 to 290 (WLPFLLILLPANIMTMVMYAF). The PAS 1 domain occupies 300–370 (SETHFRNAME…QQVEKLISGE (71 aa)). PAC domains lie at 374-426 (YSME…VNQQ) and 501-552 (FKLE…ALFQ). Positions 553–623 (EKERLHITLD…LMENIYSADT (71 aa)) constitute a PAS 2 domain. A PAC 3 domain is found at 626-680 (SAIEQDVVLHCRSGGSYDVHYSITPLSTLDGSNIGSVLVIQDVTESRKMLRQLSY). A GGDEF domain is found at 712–845 (QRHALVFIDL…GRGRVTVYEP (134 aa)). D720 is a binding site for Mg(2+). Residues N728, H733, and D737 each contribute to the substrate site. D763 is a Mg(2+) binding site. The Proton acceptor role is filled by D763. A substrate-binding site is contributed by R783. In terms of domain architecture, EAL spans 855–1104 (AAMSLDEQWR…LLVNSSYFAI (250 aa)).

Homodimer. It depends on Mg(2+) as a cofactor.

The protein localises to the cell inner membrane. The enzyme catalyses 2 GTP = 3',3'-c-di-GMP + 2 diphosphate. It functions in the pathway purine metabolism; 3',5'-cyclic di-GMP biosynthesis. Its function is as follows. Catalyzes the synthesis of cyclic-di-GMP (c-di-GMP) via the condensation of 2 GTP molecules. Involved in the control of the switch from cell motility to adhesion via regulation of cellular levels of c-di-GMP. Part of a signaling cascade that regulates curli biosynthesis. The cascade is composed of two c-di-GMP control modules, in which c-di-GMP controlled by the DgcE/PdeH pair (module I) regulates the activity of the DgcM/PdeR pair (module II), which in turn regulates activity of the transcription factor MlrA and expression of the master biofilm regulator csgD. This Escherichia coli (strain K12) protein is Probable diguanylate cyclase DgcE.